A 518-amino-acid chain; its full sequence is MVFPVEAIVGLVTFTFLFYFLWTKKSQKPSKPLPPKIPGGWPVIGHLFYFDDDGDDRPLARKLGDLADKYGPVFTFRLGLPLVLVVSSYEAIKDCFSTNDAIFSNRPAFLYGEYLGYNNAMLFLANYGSYWRKNRKLIIQEVLSASRLEKFKHVRFARIQTSIKNLYTRIDGNSSTINLTDWLEELNFGLIVKMIAGKNYESGKGDEQVERFKKAFKDFMILSMEFVLWDAFPIPLFKWVDFQGHVKAMKRTFKDIDSVFQNWLEEHIKKREKIMEVGTEGNEQDFIDVVLSKMSNEYLGEGYSRDTVIKATVFSLVLDAADTVALHINWGMALLINNQNALKKAQEEIDTKVGKDRWVEESDIKDLVYLQAIVKEVLRLYPPGPLLVPHENVEDCVVSGYHIPKGTRLFANVMKLQRDPKLWSNPDKFNPERFIARDIDFHGQHYEYIPFGSGRRSCPGMTYALQVEHLTMAHLIQGFNYRTPTDEPLDMKEGAGITIRKVNPVKVIITPRLAPELY.

The helical transmembrane segment at 2–22 (VFPVEAIVGLVTFTFLFYFLW) threads the bilayer. Lys254 is covalently cross-linked (Glycyl lysine isopeptide (Lys-Gly) (interchain with G-Cter in ubiquitin)). Cys458 lines the heme pocket.

It belongs to the cytochrome P450 family. CYP82E2 subfamily. It depends on heme as a cofactor. Expressed in leaves.

It localises to the membrane. The catalysed reaction is (S)-nicotine + reduced [NADPH--hemoprotein reductase] + O2 = (S)-nornicotine + formaldehyde + oxidized [NADPH--hemoprotein reductase] + H2O + H(+). Its pathway is alkaloid biosynthesis; nicotine biosynthesis. Involved in the biosynthesis of pyridine alkaloid natural products, leading mainly to the production of anabasine, anatabine, nicotine and nornicotine, effective deterrents against herbivores with antiparasitic and pesticide properties (neurotoxins); nornicotine serves as the precursor in the synthesis of the carcinogen compound N'-nitrosonornicotine (NNN). Catalyzes the demethylation of nicotine to form nornicotine. In Nicotiana tomentosiformis (Tobacco), this protein is Nicotine N-demethylase CYP82E3.